The sequence spans 249 residues: Probable septum site-determining protein MinC (249 aa).

Residues 115-141 (KPAQEAPAQAEPEAAAAPEPANEPAPA) are disordered. Residues 118–141 (QEAPAQAEPEAAAAPEPANEPAPA) are compositionally biased toward low complexity.

It belongs to the MinC family. Interacts with MinD and FtsZ.

Functionally, cell division inhibitor that blocks the formation of polar Z ring septums. Rapidly oscillates between the poles of the cell to destabilize FtsZ filaments that have formed before they mature into polar Z rings. Prevents FtsZ polymerization. This Marinobacter nauticus (strain ATCC 700491 / DSM 11845 / VT8) (Marinobacter aquaeolei) protein is Probable septum site-determining protein MinC.